A 406-amino-acid polypeptide reads, in one-letter code: Proteasome-activating nucleotidase 1 (406 aa).

Positions 13–72 (YDKDSASQQEKITALQERLEVLETQNEEMRDKLLDTNAENNKYQQKLERLTHENKKLKQS) form a coiled coil. ATP-binding positions include 194–199 (GTGKTM) and H333. The interval 404–406 (AFA) is docks into pockets in the proteasome alpha-ring to cause gate opening.

It belongs to the AAA ATPase family. Homododecamer, in a proposed two stacked hexameric ring configuration, but may also form homohexamer. The hexameric complex has likely a two-ring architecture resembling a top hat that caps the 20S proteasome core at one or both ends. Upon ATP-binding, the C-terminus of PAN probably interacts with the alpha-rings of the proteasome core by binding to the intersubunit pockets. Interacts with SAMP1-MoaE conjugate in vitro, but does not bind to SAMP1 or MoaE alone. Interacts with NcsA.

The protein localises to the cytoplasm. ATPase activity is inhibited by EDTA in vitro. Functionally, ATPase which is responsible for recognizing, binding, unfolding and translocation of substrate proteins into the archaeal 20S proteasome core particle. Is essential for opening the gate of the 20S proteasome via an interaction with its C-terminus, thereby allowing substrate entry and access to the site of proteolysis. Thus, the C-terminus of the proteasomal ATPase functions like a 'key in a lock' to induce gate opening and therefore regulate proteolysis. Unfolding activity requires energy from ATP hydrolysis, whereas ATP binding alone promotes ATPase-20S proteasome association which triggers gate opening, and supports translocation of unfolded substrates. Is also able to cleave other nucleoside triphosphates including GTP and TTP, but the rate of hydrolysis is 4- to 5-fold slower than for ATP. The sequence is that of Proteasome-activating nucleotidase 1 from Haloferax volcanii (strain ATCC 29605 / DSM 3757 / JCM 8879 / NBRC 14742 / NCIMB 2012 / VKM B-1768 / DS2) (Halobacterium volcanii).